Here is a 122-residue protein sequence, read N- to C-terminus: Large ribosomal subunit protein uL14c (122 aa).

This sequence belongs to the universal ribosomal protein uL14 family. In terms of assembly, part of the 50S ribosomal subunit.

The protein resides in the plastid. It is found in the chloroplast. In terms of biological role, binds to 23S rRNA. This Huperzia lucidula (Shining clubmoss) protein is Large ribosomal subunit protein uL14c.